We begin with the raw amino-acid sequence, 369 residues long: Sesquiterpene cyclase hepA (369 aa).

The Mg(2+) site is built by Asp100, Asn248, Ser252, and Asp256. The DDXXD motif signature appears at 100–104 (DDEID). The (N,D)D(L,I,V)X(S,T)XXXE motif motif lies at 255–262 (NDLLSLRK).

This sequence belongs to the terpene synthase family. Mg(2+) serves as cofactor.

In terms of biological role, sesquiterpene cyclase; part of the gene cluster that mediates the biosynthesis of heptelidic acid (HA), a sesquiterpene lactone that acts as an inhibitor of glyceraldehyde-3-phosphatedehydrogenase (GAPDH) and a growth inhibitor of the salt-tolerant lactic acid bacteria in soy sauce brewing. This Aspergillus oryzae (strain ATCC 42149 / RIB 40) (Yellow koji mold) protein is Sesquiterpene cyclase hepA.